A 228-amino-acid polypeptide reads, in one-letter code: Pyridoxal phosphate homeostasis protein (228 aa).

N6-(pyridoxal phosphate)lysine is present on lysine 35.

The protein belongs to the pyridoxal phosphate-binding protein YggS/PROSC family.

Its function is as follows. Pyridoxal 5'-phosphate (PLP)-binding protein, which is involved in PLP homeostasis. This Aquifex aeolicus (strain VF5) protein is Pyridoxal phosphate homeostasis protein.